A 300-amino-acid chain; its full sequence is 1D-myo-inositol 2-acetamido-2-deoxy-alpha-D-glucopyranoside deacetylase (300 aa).

3 residues coordinate Zn(2+): H13, D16, and H147.

The protein belongs to the MshB deacetylase family. The cofactor is Zn(2+).

The enzyme catalyses 1D-myo-inositol 2-acetamido-2-deoxy-alpha-D-glucopyranoside + H2O = 1D-myo-inositol 2-amino-2-deoxy-alpha-D-glucopyranoside + acetate. Functionally, catalyzes the deacetylation of 1D-myo-inositol 2-acetamido-2-deoxy-alpha-D-glucopyranoside (GlcNAc-Ins) in the mycothiol biosynthesis pathway. This is 1D-myo-inositol 2-acetamido-2-deoxy-alpha-D-glucopyranoside deacetylase from Mycobacterium avium (strain 104).